The chain runs to 221 residues: Ras-related protein Rab-28 (221 aa).

An N-acetylserine modification is found at S2. Phosphoserine is present on S8. GTP-binding residues include G21, G24, K25, T26, S27, G38, K39, Y41, and T44. Position 26 (T26) interacts with Mg(2+). The segment at 35–49 (ETFGKRYKQTIGLDF) is switch I. T44 and D68 together coordinate Mg(2+). The tract at residues 68–85 (DIGGQTIGGKMLDKYIYG) is switch II. The GTP site is built by G71, N129, K130, D132, A160, and K161. A Cysteine methyl ester modification is found at C218. A lipid anchor (S-farnesyl cysteine) is attached at C218. Residues 219-221 (AVQ) constitute a propeptide, removed in mature form.

It belongs to the small GTPase superfamily. Rab family. Interacts (prenylated form) with PDE6D; the interaction promotes RAB28 delivery to the photoreceptor outer segments. Interacts with KCNJ13; the interaction may facilitate cone outer segments phagocytosis. Also participates in nuclear factor kappa-B p65/RELA nuclear transport in endothelial cells. Mg(2+) is required as a cofactor. Isoprenylated.

The protein resides in the cell membrane. The protein localises to the cytoplasm. It localises to the cytoskeleton. Its subcellular location is the cilium basal body. It is found in the nucleus. The enzyme catalyses GTP + H2O = GDP + phosphate + H(+). Its activity is regulated as follows. Regulated by guanine nucleotide exchange factors (GEFs) which promote the exchange of bound GDP for free GTP. Regulated by GTPase activating proteins (GAPs) which increase the GTP hydrolysis activity. Inhibited by GDP dissociation inhibitors (GDIs). In terms of biological role, the small GTPases Rab are key regulators of intracellular membrane trafficking, from the formation of transport vesicles to their fusion with membranes. Rabs cycle between an inactive GDP-bound form and an active GTP-bound form that is able to recruit to membranes different sets of downstream effectors directly responsible for vesicle formation, movement, tethering and fusion. RAB28 is required for shedding and phagocytosis of cone cell outer segments (OS) discs in the retina. Also participates in nuclear factor kappa-B p65/RELA nuclear transport in endothelial cells. This Pongo abelii (Sumatran orangutan) protein is Ras-related protein Rab-28 (RAB28).